Here is a 343-residue protein sequence, read N- to C-terminus: Glucokinase (343 aa).

G18–T23 provides a ligand contact to ATP.

The protein belongs to the bacterial glucokinase family.

The protein resides in the cytoplasm. It carries out the reaction D-glucose + ATP = D-glucose 6-phosphate + ADP + H(+). The sequence is that of Glucokinase from Brucella suis biovar 1 (strain 1330).